The following is a 240-amino-acid chain: Manganese transport system ATP-binding protein MntB (240 aa).

The region spanning 1–233 is the ABC transporter domain; the sequence is MNIQGLTIAY…KIQFAYGDAP (233 aa). 33 to 40 is an ATP binding site; that stretch reads GPNGAGKS.

It belongs to the ABC transporter superfamily.

It is found in the cell membrane. This protein is probably a component of a manganese permease, a binding protein-dependent, ATP-driven transport system. Probably responsible for energy coupling to the transport system. This Listeria innocua serovar 6a (strain ATCC BAA-680 / CLIP 11262) protein is Manganese transport system ATP-binding protein MntB (mntB).